A 261-amino-acid chain; its full sequence is Undecaprenyl-diphosphatase (261 aa).

6 helical membrane passes run 39–59, 76–96, 99–119, 173–193, 206–226, and 238–258; these read NVLL…LIIF, LLII…KDFF, LFVS…ILWL, AAKF…VLDL, IDLM…YFAV, and LTWF…LQAA.

This sequence belongs to the UppP family.

Its subcellular location is the cell membrane. It carries out the reaction di-trans,octa-cis-undecaprenyl diphosphate + H2O = di-trans,octa-cis-undecaprenyl phosphate + phosphate + H(+). In terms of biological role, catalyzes the dephosphorylation of undecaprenyl diphosphate (UPP). Confers resistance to bacitracin. The polypeptide is Undecaprenyl-diphosphatase (Carboxydothermus hydrogenoformans (strain ATCC BAA-161 / DSM 6008 / Z-2901)).